Here is an 89-residue protein sequence, read N- to C-terminus: Small ribosomal subunit protein uS19 (89 aa).

It belongs to the universal ribosomal protein uS19 family.

Protein S19 forms a complex with S13 that binds strongly to the 16S ribosomal RNA. The sequence is that of Small ribosomal subunit protein uS19 from Xylella fastidiosa (strain M12).